The chain runs to 157 residues: SsrA-binding protein (157 aa).

This sequence belongs to the SmpB family.

It is found in the cytoplasm. Functionally, required for rescue of stalled ribosomes mediated by trans-translation. Binds to transfer-messenger RNA (tmRNA), required for stable association of tmRNA with ribosomes. tmRNA and SmpB together mimic tRNA shape, replacing the anticodon stem-loop with SmpB. tmRNA is encoded by the ssrA gene; the 2 termini fold to resemble tRNA(Ala) and it encodes a 'tag peptide', a short internal open reading frame. During trans-translation Ala-aminoacylated tmRNA acts like a tRNA, entering the A-site of stalled ribosomes, displacing the stalled mRNA. The ribosome then switches to translate the ORF on the tmRNA; the nascent peptide is terminated with the 'tag peptide' encoded by the tmRNA and targeted for degradation. The ribosome is freed to recommence translation, which seems to be the essential function of trans-translation. This is SsrA-binding protein from Chlorobium luteolum (strain DSM 273 / BCRC 81028 / 2530) (Pelodictyon luteolum).